The chain runs to 198 residues: Large ribosomal subunit protein eL18 (198 aa).

A disordered region spans residues 157–198 (RHFGASGVPGSHSKPYATNRGKETKRGRRTGRSYKRKAFRHV). Basic residues predominate over residues 179–198 (ETKRGRRTGRSYKRKAFRHV).

Belongs to the eukaryotic ribosomal protein eL18 family.

Its subcellular location is the cytoplasm. This Leishmania major protein is Large ribosomal subunit protein eL18 (RPL18-A).